The sequence spans 994 residues: Bifunctional glutamine synthetase adenylyltransferase/adenylyl-removing enzyme (994 aa).

The interval 1–487 is adenylyl removase; the sequence is MVVTKLATQR…LHTKLFYQPL (487 aa). Positions 492 to 994 are adenylyl transferase; that stretch reads GPTGLEIAHG…KAVVRKVFGS (503 aa).

Belongs to the GlnE family. Mg(2+) serves as cofactor.

The catalysed reaction is [glutamine synthetase]-O(4)-(5'-adenylyl)-L-tyrosine + phosphate = [glutamine synthetase]-L-tyrosine + ADP. It carries out the reaction [glutamine synthetase]-L-tyrosine + ATP = [glutamine synthetase]-O(4)-(5'-adenylyl)-L-tyrosine + diphosphate. Involved in the regulation of glutamine synthetase GlnA, a key enzyme in the process to assimilate ammonia. When cellular nitrogen levels are high, the C-terminal adenylyl transferase (AT) inactivates GlnA by covalent transfer of an adenylyl group from ATP to specific tyrosine residue of GlnA, thus reducing its activity. Conversely, when nitrogen levels are low, the N-terminal adenylyl removase (AR) activates GlnA by removing the adenylyl group by phosphorolysis, increasing its activity. The regulatory region of GlnE binds the signal transduction protein PII (GlnB) which indicates the nitrogen status of the cell. The protein is Bifunctional glutamine synthetase adenylyltransferase/adenylyl-removing enzyme of Mycobacterium tuberculosis (strain CDC 1551 / Oshkosh).